Here is a 461-residue protein sequence, read N- to C-terminus: Interleukin-1 receptor-associated kinase 4 (461 aa).

Met1 carries the N-acetylmethionine modification. The Death domain occupies 20–104; sequence RKLSDFIDPQ…APASLLLPDA (85 aa). N6-acetyllysine is present on Lys34. The region spanning 187–455 is the Protein kinase domain; it reads SVGGNKMGEG…PDIKKVQQLL (269 aa). ATP-binding positions include 193–201 and Lys214; that span reads MGEGGFGVV. Asp312 (proton acceptor) is an active-site residue. ATP-binding positions include 314–317 and Asp330; that span reads KSAN. Phosphothreonine is present on residues Thr343 and Thr346. Ser347 is subject to Phosphoserine.

The protein belongs to the protein kinase superfamily. TKL Ser/Thr protein kinase family. Pelle subfamily. As to quaternary structure, associates with MYD88 and IRAK2 to form a ternary complex called the Myddosome. Once phosphorylated, IRAK4 dissociates from the receptor complex and then associates with the TNF receptor-associated factor 6 (TRAF6), IRAK1, and PELI1; this intermediate complex is required for subsequent NF-kappa-B activation. Direct binding of SMAD6 to PELI1 prevents complex formation and hence negatively regulates IL1R-TLR signaling and eventually NF-kappa-B-mediated gene expression. Interacts with IL1RL1. Interacts (when phosphorylated) with IRAK1. May interact (when phosphorylated) with IRAK3. Requires Mg(2+) as cofactor. Post-translationally, phosphorylated.

Its subcellular location is the cytoplasm. The catalysed reaction is L-seryl-[protein] + ATP = O-phospho-L-seryl-[protein] + ADP + H(+). The enzyme catalyses L-threonyl-[protein] + ATP = O-phospho-L-threonyl-[protein] + ADP + H(+). Functionally, serine/threonine-protein kinase that plays a critical role in initiating innate immune response against foreign pathogens. Involved in Toll-like receptor (TLR) and IL-1R signaling pathways. Is rapidly recruited by MYD88 to the receptor-signaling complex upon TLR activation to form the Myddosome together with IRAK2. Phosphorylates initially IRAK1, thus stimulating the kinase activity and intensive autophosphorylation of IRAK1. Phosphorylates E3 ubiquitin ligases Pellino proteins (PELI1, PELI2 and PELI3) to promote pellino-mediated polyubiquitination of IRAK1. Then, the ubiquitin-binding domain of IKBKG/NEMO binds to polyubiquitinated IRAK1 bringing together the IRAK1-MAP3K7/TAK1-TRAF6 complex and the NEMO-IKKA-IKKB complex. In turn, MAP3K7/TAK1 activates IKKs (CHUK/IKKA and IKBKB/IKKB) leading to NF-kappa-B nuclear translocation and activation. Alternatively, phosphorylates TIRAP to promote its ubiquitination and subsequent degradation. Phosphorylates NCF1 and regulates NADPH oxidase activation after LPS stimulation suggesting a similar mechanism during microbial infections. The protein is Interleukin-1 receptor-associated kinase 4 (IRAK4) of Bos taurus (Bovine).